Here is a 397-residue protein sequence, read N- to C-terminus: Phosphoglycerate kinase (397 aa).

Residues 21-23, Arg-36, 59-62, Arg-118, and Arg-151 each bind substrate; these read DFN and HCGR. Residues Lys-201, Glu-323, and 353–356 each bind ATP; that span reads GGDT.

The protein belongs to the phosphoglycerate kinase family. As to quaternary structure, monomer.

Its subcellular location is the cytoplasm. It catalyses the reaction (2R)-3-phosphoglycerate + ATP = (2R)-3-phospho-glyceroyl phosphate + ADP. It participates in carbohydrate degradation; glycolysis; pyruvate from D-glyceraldehyde 3-phosphate: step 2/5. This Bartonella tribocorum (strain CIP 105476 / IBS 506) protein is Phosphoglycerate kinase.